The sequence spans 427 residues: Gamma-glutamyl phosphate reductase (427 aa).

The protein belongs to the gamma-glutamyl phosphate reductase family.

It is found in the cytoplasm. It catalyses the reaction L-glutamate 5-semialdehyde + phosphate + NADP(+) = L-glutamyl 5-phosphate + NADPH + H(+). It participates in amino-acid biosynthesis; L-proline biosynthesis; L-glutamate 5-semialdehyde from L-glutamate: step 2/2. Catalyzes the NADPH-dependent reduction of L-glutamate 5-phosphate into L-glutamate 5-semialdehyde and phosphate. The product spontaneously undergoes cyclization to form 1-pyrroline-5-carboxylate. This chain is Gamma-glutamyl phosphate reductase, found in Anaeromyxobacter dehalogenans (strain 2CP-1 / ATCC BAA-258).